The chain runs to 404 residues: Serpin-Z2B (404 aa).

The segment at 349–373 (GTEAAAATACTMKFLCLTLTSPVDF) is RCL.

The protein belongs to the serpin family.

Its function is as follows. Probable serine protease inhibitor. This Oryza sativa subsp. japonica (Rice) protein is Serpin-Z2B.